Consider the following 328-residue polypeptide: DNA-directed RNA polymerase subunit alpha (328 aa).

The tract at residues 1–230 is alpha N-terminal domain (alpha-NTD); sequence MSNHGLQMPE…DHVSFFIQLE (230 aa). Positions 248 to 328 are alpha C-terminal domain (alpha-CTD); that stretch reads RIRELLAQPV…EEYLEEKKAS (81 aa).

It belongs to the RNA polymerase alpha chain family. In terms of assembly, homodimer. The RNAP catalytic core consists of 2 alpha, 1 beta, 1 beta' and 1 omega subunit. When a sigma factor is associated with the core the holoenzyme is formed, which can initiate transcription.

The catalysed reaction is RNA(n) + a ribonucleoside 5'-triphosphate = RNA(n+1) + diphosphate. In terms of biological role, DNA-dependent RNA polymerase catalyzes the transcription of DNA into RNA using the four ribonucleoside triphosphates as substrates. The polypeptide is DNA-directed RNA polymerase subunit alpha (Salinibacter ruber (strain DSM 13855 / M31)).